Reading from the N-terminus, the 337-residue chain is Cytoskeleton protein RodZ (337 aa).

Over 1-111 (MNTEATHDQN…LGKRRKKRDG (111 aa)) the chain is Cytoplasmic. In terms of domain architecture, HTH cro/C1-type spans 19 to 71 (LRNAREQLGLSQQAVAERLCLKVSTVRDIEEDKAPADLASTFLRGYIRSYARL). The segment at residues 30–49 (QQAVAERLCLKVSTVRDIEE) is a DNA-binding region (H-T-H motif). Residues 112–132 (WLMTFTWLVLFVVIGLSGAWW) traverse the membrane as a helical; Signal-anchor for type II membrane protein segment. Over 133 to 337 (WQDHKAQQEE…TLNAEQSPAQ (205 aa)) the chain is Periplasmic. Over residues 145-167 (TMADQSSAELSSNSEQGQSVPLN) the composition is skewed to polar residues. The tract at residues 145-235 (TMADQSSAEL…PTAATTPDGA (91 aa)) is disordered. Over residues 168-207 (TSTTTDPATTSTPPASVDTTATNTQTPAVTAPAPAVDPQQ) the composition is skewed to low complexity. Over residues 208 to 218 (NAVVSPSQANV) the composition is skewed to polar residues. The segment covering 219–235 (DTAATPAPTAATTPDGA) has biased composition (low complexity).

The protein belongs to the RodZ family.

It localises to the cell inner membrane. Cytoskeletal protein that is involved in cell-shape control through regulation of the length of the long axis. The polypeptide is Cytoskeleton protein RodZ (Shigella boydii serotype 4 (strain Sb227)).